Here is a 465-residue protein sequence, read N- to C-terminus: CUGBP Elav-like family member 3 (465 aa).

RRM domains are found at residues 7 to 88 (IKLF…PADS) and 95 to 174 (KLFV…FADT). 2 disordered regions span residues 283-311 (PVPTQPTGQPAPDALYPNGVHPYPAQSPA) and 345-379 (PPALVAQQPPPPPQQQQQQQQQQQQQQQQREGPDG). Residues 345 to 358 (PPALVAQQPPPPPQ) show a composition bias toward pro residues. Residues 359-373 (QQQQQQQQQQQQQQQ) show a composition bias toward low complexity. The RRM 3 domain maps to 380–458 (CNIFIYHLPQ…KRLKVQLKRP (79 aa)).

Belongs to the CELF/BRUNOL family.

It is found in the nucleus. The protein resides in the cytoplasm. Its function is as follows. RNA-binding protein involved in the regulation of pre-mRNA alternative splicing. Mediates exon inclusion and/or exclusion in pre-mRNA that are subject to tissue-specific and developmentally regulated alternative splicing. Specifically activates exon 5 inclusion of cardiac isoforms of TNNT2 during heart remodeling at the juvenile to adult transition. Activates the splicing of MAPT/Tau exon 10. Binds to muscle-specific splicing enhancer (MSE) intronic sites flanking the alternative exon 5 of TNNT2 pre-mRNA. The sequence is that of CUGBP Elav-like family member 3 (Celf3) from Mus musculus (Mouse).